The following is a 464-amino-acid chain: Argininosuccinate lyase (464 aa).

This sequence belongs to the lyase 1 family. Argininosuccinate lyase subfamily.

It is found in the cytoplasm. The catalysed reaction is 2-(N(omega)-L-arginino)succinate = fumarate + L-arginine. It participates in amino-acid biosynthesis; L-arginine biosynthesis; L-arginine from L-ornithine and carbamoyl phosphate: step 3/3. The chain is Argininosuccinate lyase from Sulfurovum sp. (strain NBC37-1).